Reading from the N-terminus, the 259-residue chain is Probable WRKY transcription factor 65 (259 aa).

The segment covering 1–17 has biased composition (basic and acidic residues); sequence MKRGLDMARSYNDHESS. 2 disordered regions span residues 1–101 and 126–165; these read MKRG…RCSS and TSEHNHPWPLTSSTRNGPKPKPEPKPEPEPEVEPEAEEED. The segment covering 18-31 has biased composition (polar residues); sequence QETGPESPNSSTFN. A compositionally biased stretch (basic and acidic residues) spans 47-69; sequence RSVEKRVVNVPMKEMEGSRHKGD. Residues 68–134 constitute a DNA-binding region (WRKY); that stretch reads GDTTPPSDSW…YTSEHNHPWP (67 aa). Positions 154–165 are enriched in acidic residues; it reads EPEVEPEAEEED.

The protein resides in the nucleus. In terms of biological role, transcription factor. Interacts specifically with the W box (5'-(T)TGAC[CT]-3'), a frequently occurring elicitor-responsive cis-acting element. This is Probable WRKY transcription factor 65 (WRKY65) from Arabidopsis thaliana (Mouse-ear cress).